Consider the following 1463-residue polypeptide: MMSFVQCGTWFLLTLLHPSLILAQQSNVDELGCNYLGQSYESRDVWKPEPCQICVCDSGSVLCDDIMCDDEPLDCPNPEIPFGECCAICPQPSTPAPVIPDGNRPQGPKGDPGPPGIPGRNGDPGLPGQPGLPGPPGSPGICESCPTGGQNYSPQFDSYDVKSGVGGMGGYPGPAGPPGPPGPPGSSGHPGSPGSPGYQGPPGEPGQAGPAGPPGPPGAIGPSGPAGKDGESGRPGRPGERGLPGPPGIKGPAGIPGFPGMKGHRGFDGRNGEKGETGAPGLKGENGLPGDNGAPGPMGPRGAPGERGRPGLPGAAGARGNDGARGSDGQPGPPGPPGTAGFPGSPGAKGEVGPAGSPGSNGSPGQRGEPGPQGHAGAQGPPGPPGNNGSPGGKGEMGPAGIPGAPGLLGARGPPGPAGANGAPGQRGPSGEPGKNGAKGEPGARGERGEAGSPGIPGPKGEDGKDGSPGEPGANGVPGNPGERGAPGFRGPAGPNGAPGEKGPAGERGGPGPAGPRGVAGEPGRDGTPGGPGIRGMPGSPGGPGNDGKPGPPGSQGESGRPGPPGPSGPRGQPGVMGFPGPKGNDGAPGKNGERGGPGGPGLPGPAGKNGETGPQGPPGPTGAPGDKGDAGPPGPQGLQGIPGTSGPPGENGKPGEPGPKGEAGAPGVPGGKGDSGAPGERGPPGTAGTPGLRGGAGPPGPEGGKGPAGPPGPPGTSGPPGLQGMPGERGGPGSPGPKGEKGEPGGAGADGVPGKDGPRGPAGPIGPPGPAGQPGDKGEGGAPGLPGIAGPRGGPGERGEHGPPGPAGFPGAPGQNGEPGAKGERGAPGEKGEGGPPGAAGPPGGSGPAGPPGPQGVKGERGSPGGPGAAGFPGGRGLPGPPGNNGNPGPPGPSGAPGKDGPPGPAGNSGSPGNPGVAGPKGDAGQPGEKGPPGAQGPPGSPGPLGIAGLTGARGLAGPPGMPGPRGSPGPQGIKGESGKPGASGHNGERGPPGPQGLPGQPGTAGEPGRDGNPGSDGQPGRDGSPGGKGDRGENGSPGAPGAPGHPGPPGPVGPSGKNGDRGETGPAGPSGAPGPAGARGAPGPQGPRGDKGETGERGSNGIKGHRGFPGNPGPPGSPGAAGHQGAVGSPGPAGPRGPVGPHGPPGKDGSSGHPGPIGPPGPRGNRGERGSEGSPGHPGQPGPPGPPGAPGPCCGGGAAIAGVGGEKSGGFSPYYGDDPMDFKINTEEIMSSLKSVNGQIESLISPDGSRKNPARNCRDLKFCHPELKSGEYWVDPNQGCKMDAIKVFCNMETGETCINASPMTVPRKHWWTDAGAEKKHVWFGESMNGGFQFSYGNPDLPEDVLDVQLAFLRLLSSRASQNITYHCKNSIAYMDQANGNVKKSLKLMGSNEGEFKAEGNSKFTYTVLEDGCTKHTGEWSKTVFEYQTRKAMRLPIIDIAPYDIGGPDQEFGVDIGPVCFL.

The first 23 residues, 1–23 (MMSFVQCGTWFLLTLLHPSLILA), serve as a signal peptide directing secretion. Residues 24 to 154 (QQSNVDELGC…CPTGGQNYSP (131 aa)) constitute a propeptide, N-terminal propeptide. The 60-residue stretch at 31–90 (LGCNYLGQSYESRDVWKPEPCQICVCDSGSVLCDDIMCDDEPLDCPNPEIPFGECCAICP) folds into the VWFC domain. The disordered stretch occupies residues 97-1195 (PVIPDGNRPQ…PGPPGAPGPC (1099 aa)). A compositionally biased stretch (polar residues) spans 147–156 (TGGQNYSPQF). The tract at residues 155-169 (QFDSYDVKSGVGGMG) is nonhelical region (N-terminal). Residues 164 to 173 (GVGGMGGYPG) show a composition bias toward gly residues. A triple-helical region region spans residues 170-1195 (GYPGPAGPPG…PGPPGAPGPC (1026 aa)). Positions 174-184 (PAGPPGPPGPP) are enriched in pro residues. Positions 186–198 (SSGHPGSPGSPGY) are enriched in low complexity. Residues 228 to 240 (KDGESGRPGRPGE) show a composition bias toward basic and acidic residues. Low complexity predominate over residues 250–259 (KGPAGIPGFP). Position 262 is a 5-hydroxylysine; alternate (Lys262). The O-linked (Gal...) hydroxylysine; alternate glycan is linked to Lys262. A compositionally biased stretch (basic and acidic residues) spans 265–276 (RGFDGRNGEKGE). The residue at position 283 (Lys283) is a 5-hydroxylysine. Low complexity-rich tracts occupy residues 310 to 321 (PGLPGAAGARGN) and 354 to 379 (PAGSPGSNGSPGQRGEPGPQGHAGAQ). The segment covering 389-398 (GSPGGKGEMG) has biased composition (gly residues). 2 stretches are compositionally biased toward low complexity: residues 399-429 (PAGIPGAPGLLGARGPPGPAGANGAPGQRGP) and 481-502 (PGERGAPGFRGPAGPNGAPGEK). Positions 527–548 (GTPGGPGIRGMPGSPGGPGNDG) are enriched in gly residues. 2 stretches are compositionally biased toward low complexity: residues 606–615 (PAGKNGETGP) and 637–652 (QGLQGIPGTSGPPGEN). Residues 668 to 677 (GVPGGKGDSG) are compositionally biased toward gly residues. Positions 678–691 (APGERGPPGTAGTP) are enriched in low complexity. The span at 692–708 (GLRGGAGPPGPEGGKGP) shows a compositional bias: gly residues. Residues 709 to 718 (AGPPGPPGTS) are compositionally biased toward pro residues. A compositionally biased stretch (basic and acidic residues) spans 822-834 (AKGERGAPGEKGE). Positions 835–849 (GGPPGAAGPPGGSGP) are enriched in gly residues. Lys859 is modified (5-hydroxylysine). Positions 863–879 (GSPGGPGAAGFPGGRGL) are enriched in gly residues. Residues 889 to 906 (PGPPGPSGAPGKDGPPGP) are compositionally biased toward pro residues. Low complexity-rich tracts occupy residues 907–934 (AGNSGSPGNPGVAGPKGDAGQPGEKGPP) and 945–960 (PLGIAGLTGARGLAGP). Residue Lys976 is modified to 5-hydroxylysine. Residues 1045–1054 (PGHPGPPGPV) show a composition bias toward pro residues. Over residues 1068–1084 (PAGPSGAPGPAGARGAP) the composition is skewed to low complexity. 5-hydroxylysine is present on residues Lys1093 and Lys1105. Residues 1120–1132 (PGAAGHQGAVGSP) are compositionally biased toward low complexity. The segment covering 1180 to 1192 (PGQPGPPGPPGAP) has biased composition (pro residues). Positions 1219 to 1463 (DDPMDFKINT…GVDIGPVCFL (245 aa)) are cleaved as a propeptide — C-terminal propeptide. A Fibrillar collagen NC1 domain is found at 1229–1463 (EEIMSSLKSV…GVDIGPVCFL (235 aa)). Intrachain disulfides connect Cys1259–Cys1291, Cys1299–Cys1461, and Cys1369–Cys1414. The Ca(2+) site is built by Asp1277, Asn1279, Gln1280, Cys1282, and Asp1285.

It belongs to the fibrillar collagen family. Trimers of identical alpha 1(III) chains. The chains are linked to each other by interchain disulfide bonds. Trimers are also cross-linked via hydroxylysines. Interacts with ADGRG1. In terms of processing, O-glycosylated. Post-translationally, prolines at the third position of the tripeptide repeating unit (G-X-Y) are hydroxylated in some or all of the chains.

It localises to the secreted. Its subcellular location is the extracellular space. The protein localises to the extracellular matrix. In terms of biological role, collagen type III occurs in most soft connective tissues along with type I collagen. Involved in regulation of cortical development. Is the major ligand of ADGRG1 in the developing brain and binding to ADGRG1 inhibits neuronal migration and activates the RhoA pathway by coupling ADGRG1 to GNA13 and possibly GNA12. The protein is Collagen alpha-1(III) chain (Col3a1) of Rattus norvegicus (Rat).